The sequence spans 63 residues: Large ribosomal subunit protein uL30 (63 aa).

It belongs to the universal ribosomal protein uL30 family. As to quaternary structure, part of the 50S ribosomal subunit.

The polypeptide is Large ribosomal subunit protein uL30 (Bradyrhizobium sp. (strain BTAi1 / ATCC BAA-1182)).